The following is a 289-amino-acid chain: Enoyl-CoA delta isomerase 1, mitochondrial (289 aa).

A mitochondrion-targeting transit peptide spans 1–28 (MALAAARRVLLQAGSRLGRRGAVDGARR). Position 48 is an N6-acetyllysine; alternate (K48). Residue K48 is modified to N6-succinyllysine; alternate. An N6-succinyllysine modification is found at K71. K76 is modified (N6-acetyllysine). Substrate-binding positions include 93-97 (AGLDL), G140, and N164. An N6-acetyllysine; alternate mark is found at K222, K229, and K255. Residues K222, K229, and K255 each carry the N6-succinyllysine; alternate modification. K275 carries the post-translational modification N6-succinyllysine. K283 is modified (N6-acetyllysine; alternate). K283 is subject to N6-succinyllysine; alternate.

This sequence belongs to the enoyl-CoA hydratase/isomerase family. In terms of assembly, homotrimer.

The protein localises to the mitochondrion matrix. It carries out the reaction a (3Z)-enoyl-CoA = a 4-saturated (2E)-enoyl-CoA. It catalyses the reaction a (3E)-enoyl-CoA = a 4-saturated (2E)-enoyl-CoA. The enzyme catalyses (3Z)-octenoyl-CoA = (2E)-octenoyl-CoA. The catalysed reaction is (2E)-tetradecenoyl-CoA = (3Z)-tetradecenoyl-CoA. It carries out the reaction (3Z)-dodecenoyl-CoA = (2E)-dodecenoyl-CoA. It catalyses the reaction (3Z)-hexenoyl-CoA = (2E)-hexenoyl-CoA. The enzyme catalyses (3Z)-decenoyl-CoA = (2E)-decenoyl-CoA. It functions in the pathway lipid metabolism; fatty acid beta-oxidation. In terms of biological role, key enzyme of fatty acid beta-oxidation. Able to isomerize both 3-cis (3Z) and 3-trans (3E) double bonds into the 2-trans (2E) form in a range of enoyl-CoA species, with a preference for (3Z)-enoyl-CoAs over (3E)-enoyl-CoAs. The catalytic efficiency of this enzyme is not affected by the fatty acyl chain length. The sequence is that of Enoyl-CoA delta isomerase 1, mitochondrial from Rattus norvegicus (Rat).